We begin with the raw amino-acid sequence, 171 residues long: Large ribosomal subunit protein bL9 (171 aa).

Belongs to the bacterial ribosomal protein bL9 family.

In terms of biological role, binds to the 23S rRNA. This chain is Large ribosomal subunit protein bL9, found in Rickettsia felis (strain ATCC VR-1525 / URRWXCal2) (Rickettsia azadi).